Reading from the N-terminus, the 301-residue chain is LHMIHLHWYQYPPMNPMMYPLLLIFMLFTGILCLAGNFVTIWVFMNTKSLRTPANLLVVNLAMSDFLMMFTMFPPMMVTCYYHTWTLGPTFCQVYAFLGNLCGCASIWTMVFITFDRYNVIVKGVAGEPLSTKKASLWILTIWVLSTTWCIAPFFGWNHYVPEGNLTGCGTDYLSEDILSRSYLYVYSTWVYFLPLAITIYCYVFIIKAVAAHEKGMRDQAKKMGIKSLRNEEAQKTSAECRLAKIAMTTVALWFIAWTPCLLINWVGMFARSYLSPVYTIWGYVFAKANAVYNPIVYAIS.

The Extracellular segment spans residues 1-18 (LHMIHLHWYQYPPMNPMM). A helical membrane pass occupies residues 19–43 (YPLLLIFMLFTGILCLAGNFVTIWV). The Cytoplasmic segment spans residues 44-55 (FMNTKSLRTPAN). A helical membrane pass occupies residues 56-78 (LLVVNLAMSDFLMMFTMFPPMMV). Topologically, residues 79-92 (TCYYHTWTLGPTFC) are extracellular. A disulfide bridge connects residues C92 and C169. Residues 93–115 (QVYAFLGNLCGCASIWTMVFITF) form a helical membrane-spanning segment. The 'Ionic lock' involved in activated form stabilization signature appears at 116-118 (DRY). Residues 116-134 (DRYNVIVKGVAGEPLSTKK) are Cytoplasmic-facing. Residues 135 to 155 (ASLWILTIWVLSTTWCIAPFF) traverse the membrane as a helical segment. At 156–182 (GWNHYVPEGNLTGCGTDYLSEDILSRS) the chain is on the extracellular side. N-linked (GlcNAc...) asparagine glycosylation is present at N165. The helical transmembrane segment at 183-204 (YLYVYSTWVYFLPLAITIYCYV) threads the bilayer. Residues 205–245 (FIIKAVAAHEKGMRDQAKKMGIKSLRNEEAQKTSAECRLAK) are Cytoplasmic-facing. Residues 246 to 267 (IAMTTVALWFIAWTPCLLINWV) form a helical membrane-spanning segment. The Extracellular portion of the chain corresponds to 268–278 (GMFARSYLSPV). Residues 279-300 (YTIWGYVFAKANAVYNPIVYAI) traverse the membrane as a helical segment. K288 is subject to N6-(retinylidene)lysine.

The protein belongs to the G-protein coupled receptor 1 family. Opsin subfamily. In terms of assembly, homodimer. Interacts with GNAQ. In terms of processing, contains one covalently linked retinal chromophore.

The protein resides in the cell projection. It is found in the rhabdomere membrane. Photoreceptor required for image-forming vision at low light intensity. Can use both retinal and 3-dehydroretinal as visual pigment. Light-induced isomerization of 11-cis to all-trans retinal triggers a conformational change that activates signaling via G-proteins. Signaling via GNAQ probably mediates the activation of phospholipase C. The protein is Rhodopsin (RHO) of Procambarus seminolae (Crayfish).